Reading from the N-terminus, the 310-residue chain is HPr kinase/phosphorylase 1 (310 aa).

Catalysis depends on residues His-139 and Lys-160. Residue 154-161 (GQSGVGKS) participates in ATP binding. Ser-161 is a Mg(2+) binding site. The Proton acceptor; for phosphorylation activity. Proton donor; for dephosphorylation activity role is filled by Asp-178. The important for the catalytic mechanism of both phosphorylation and dephosphorylation stretch occupies residues 202-211 (LEIRGLGIIN). Residue Glu-203 coordinates Mg(2+). Arg-244 is an active-site residue. The segment at 265–270 (PVRPGR) is important for the catalytic mechanism of dephosphorylation.

This sequence belongs to the HPrK/P family. As to quaternary structure, homohexamer. Mg(2+) is required as a cofactor.

It catalyses the reaction [HPr protein]-L-serine + ATP = [HPr protein]-O-phospho-L-serine + ADP + H(+). The catalysed reaction is [HPr protein]-O-phospho-L-serine + phosphate + H(+) = [HPr protein]-L-serine + diphosphate. Its function is as follows. Catalyzes the ATP- as well as the pyrophosphate-dependent phosphorylation of a specific serine residue in HPr, a phosphocarrier protein of the phosphoenolpyruvate-dependent sugar phosphotransferase system (PTS). HprK/P also catalyzes the pyrophosphate-producing, inorganic phosphate-dependent dephosphorylation (phosphorolysis) of seryl-phosphorylated HPr (P-Ser-HPr). The two antagonistic activities of HprK/P are regulated by several intracellular metabolites, which change their concentration in response to the absence or presence of rapidly metabolisable carbon sources (glucose, fructose, etc.) in the growth medium. Also phosphorylates/dephosphorylates the HPr-like catabolite repression protein crh on a specific serine residue. Therefore, by controlling the phosphorylation state of HPr and crh, HPrK/P is a sensor enzyme that plays a major role in the regulation of carbon metabolism and sugar transport: it mediates carbon catabolite repression (CCR), and regulates PTS-catalyzed carbohydrate uptake and inducer exclusion. The polypeptide is HPr kinase/phosphorylase 1 (hprK1) (Oceanobacillus iheyensis (strain DSM 14371 / CIP 107618 / JCM 11309 / KCTC 3954 / HTE831)).